The primary structure comprises 206 residues: MRPLTPRQAEILELIKRNIAETGMPPTRAEIATRLGFKSANAAEEHLKALAKKGCIEIMPGTSRGIRLPVEEEDNSETGLPLIGQVAAGEPILAQEHVEQYYQVDPSMFHPSADFLLRVKGDSMKNIGILEGDLLAVHKVQQARNGQVVVARVDDDVTVKRFEKKGNLVYLHAENEDYSPIKVDLSFQSLTIEGLAVGVIRNGDWL.

The H-T-H motif DNA-binding region spans 28 to 48 (RAEIATRLGFKSANAAEEHLK). Active-site for autocatalytic cleavage activity residues include Ser123 and Lys160.

It belongs to the peptidase S24 family. Homodimer.

It catalyses the reaction Hydrolysis of Ala-|-Gly bond in repressor LexA.. Represses a number of genes involved in the response to DNA damage (SOS response), including recA and lexA. In the presence of single-stranded DNA, RecA interacts with LexA causing an autocatalytic cleavage which disrupts the DNA-binding part of LexA, leading to derepression of the SOS regulon and eventually DNA repair. The chain is LexA repressor from Shewanella sp. (strain MR-7).